Here is a 145-residue protein sequence, read N- to C-terminus: Ribosomal RNA large subunit methyltransferase H (145 aa).

S-adenosyl-L-methionine-binding positions include leucine 64, glycine 93, and 112 to 117; that span reads LSALTF.

Belongs to the RNA methyltransferase RlmH family. Homodimer.

It is found in the cytoplasm. The enzyme catalyses pseudouridine(1915) in 23S rRNA + S-adenosyl-L-methionine = N(3)-methylpseudouridine(1915) in 23S rRNA + S-adenosyl-L-homocysteine + H(+). In terms of biological role, specifically methylates the pseudouridine at position 1915 (m3Psi1915) in 23S rRNA. In Prochlorococcus marinus (strain SARG / CCMP1375 / SS120), this protein is Ribosomal RNA large subunit methyltransferase H.